Consider the following 221-residue polypeptide: Phosphoribosylformylglycinamidine synthase subunit PurQ (221 aa).

The 220-residue stretch at 2 to 221 (KTAVIQFPGS…VFESLKTVKK (220 aa)) folds into the Glutamine amidotransferase type-1 domain. The Nucleophile role is filled by C87. Catalysis depends on residues H195 and E197.

In terms of assembly, part of the FGAM synthase complex composed of 1 PurL, 1 PurQ and 2 PurS subunits.

It is found in the cytoplasm. It carries out the reaction N(2)-formyl-N(1)-(5-phospho-beta-D-ribosyl)glycinamide + L-glutamine + ATP + H2O = 2-formamido-N(1)-(5-O-phospho-beta-D-ribosyl)acetamidine + L-glutamate + ADP + phosphate + H(+). It catalyses the reaction L-glutamine + H2O = L-glutamate + NH4(+). It functions in the pathway purine metabolism; IMP biosynthesis via de novo pathway; 5-amino-1-(5-phospho-D-ribosyl)imidazole from N(2)-formyl-N(1)-(5-phospho-D-ribosyl)glycinamide: step 1/2. Part of the phosphoribosylformylglycinamidine synthase complex involved in the purines biosynthetic pathway. Catalyzes the ATP-dependent conversion of formylglycinamide ribonucleotide (FGAR) and glutamine to yield formylglycinamidine ribonucleotide (FGAM) and glutamate. The FGAM synthase complex is composed of three subunits. PurQ produces an ammonia molecule by converting glutamine to glutamate. PurL transfers the ammonia molecule to FGAR to form FGAM in an ATP-dependent manner. PurS interacts with PurQ and PurL and is thought to assist in the transfer of the ammonia molecule from PurQ to PurL. The protein is Phosphoribosylformylglycinamidine synthase subunit PurQ of Deinococcus radiodurans (strain ATCC 13939 / DSM 20539 / JCM 16871 / CCUG 27074 / LMG 4051 / NBRC 15346 / NCIMB 9279 / VKM B-1422 / R1).